The primary structure comprises 421 residues: Serine/threonine-protein kinase OXI1 (421 aa).

In terms of domain architecture, Protein kinase spans 17 to 329; it reads LEVLSLLGRG…VEEIKGHDFF (313 aa). Residues 23–31 and lysine 45 contribute to the ATP site; that span reads LGRGAKGVV. Aspartate 149 serves as the catalytic Proton acceptor. Residues 167-246 form an activation loop region; it reads DFDLSTNLAP…VGTEEYVAPE (80 aa). At serine 235 the chain carries Phosphoserine; by PDPK1. The region spanning 330–421 is the AGC-kinase C-terminal domain; that stretch reads RGVDWEKVIL…LESDNNFLVF (92 aa). Residues 418–421 carry the PIF motif; sequence FLVF.

This sequence belongs to the protein kinase superfamily. AGC Ser/Thr protein kinase family. As to quaternary structure, interacts with PDK1 and PDK2. Expressed in roots and root hair cells.

It catalyses the reaction L-seryl-[protein] + ATP = O-phospho-L-seryl-[protein] + ADP + H(+). The enzyme catalyses L-threonyl-[protein] + ATP = O-phospho-L-threonyl-[protein] + ADP + H(+). Its activity is regulated as follows. Activated in response to hydrogen peroxide and cellulase elicitor. Activated by PDK1 in a phosphatidic acid dependent manner. Its function is as follows. Involved in oxidative burst-mediated signaling. Required for basal resistance to P.parasitica infection and root hair growth. Partly required for the activation of MPK3 and MPK6 by hydrogen peroxide and cellulase elicitor. This is Serine/threonine-protein kinase OXI1 from Arabidopsis thaliana (Mouse-ear cress).